The chain runs to 283 residues: MESFKYCFDNDGKKWIIGNTLYSGNSILYKVRKNFTSSFYNYVMKIDHKSHKPLLSEIRFYISVLDPLTIDNWTRERGIKYLAIPDLYGIGETDDYMFFVIKNLGRVFAPKDTESVFEACVTMINTLEFIHSRGFTHGKIEPRNILIRNKRLSLIDYSRTNKLYKSGNSHIDYNEDMITSGNINYMCVDNHLGATVSKRGDLEMLGYCMIEWFGGKLPWKNESSIKVIKQKKEYKKFIATFFEDCFPEGNEPLELVRYIELVYTLDYSQTPNYDRLRRLFIQD.

2 residues coordinate ATP: methionine 1 and lysine 30. A Protein kinase domain is found at 1 to 283 (MESFKYCFDN…DRLRRLFIQD (283 aa)).

This sequence belongs to the protein kinase superfamily. Ser/Thr protein kinase family. Poxviruses subfamily. In terms of assembly, interacts with B1/VPK1. Interacts with host VRK1. Interacts with host VRK2.

It localises to the host nucleus. With respect to regulation, both catalytically active kinases B1/VPK1 and host VRK2 repress B12 inhibitory activity in a B1/VPK1 deletion mutant strain. Its function is as follows. Pseudokinase that plays a role in viral DNA replication repression by activating the antiviral protein BANF1 and inhibiting the activity of host VRK1, a cellular modulator of BANF1. The polypeptide is Pseudokinase OPG198 (OPG198) (Vaccinia virus (strain Ankara) (VACV)).